A 1020-amino-acid polypeptide reads, in one-letter code: Tetrathionate reductase subunit A (1020 aa).

The tat-type signal signal peptide spans methionine 1–alanine 33. The 4Fe-4S Mo/W bis-MGD-type domain occupies glutamine 71 to leucine 154. 4 residues coordinate [4Fe-4S] cluster: cysteine 78, cysteine 81, cysteine 85, and cysteine 140.

Belongs to the prokaryotic molybdopterin-containing oxidoreductase family. In terms of assembly, probably composed of three subunits: TtrA, TtrB and TtrC. Requires [4Fe-4S] cluster as cofactor. Mo-bis(molybdopterin guanine dinucleotide) is required as a cofactor. Post-translationally, predicted to be exported by the Tat system. The position of the signal peptide cleavage has not been experimentally proven.

It localises to the periplasm. The protein localises to the cell inner membrane. Part of a membrane-bound tetrathionate reductase that catalyzes the reduction of tetrathionate to thiosulfate. TtrA is the catalytic subunit. During mice infection, the ability to use tetrathionate as an electron acceptor is a growth advantage for S.typhimurium over the competing microbiota in the lumen of the inflamed gut. In Salmonella typhimurium (strain LT2 / SGSC1412 / ATCC 700720), this protein is Tetrathionate reductase subunit A (ttrA).